The sequence spans 256 residues: Trans-aconitate 2-methyltransferase (256 aa).

Belongs to the methyltransferase superfamily. Tam family.

The protein localises to the cytoplasm. The enzyme catalyses trans-aconitate + S-adenosyl-L-methionine = (E)-3-(methoxycarbonyl)pent-2-enedioate + S-adenosyl-L-homocysteine. In terms of biological role, catalyzes the S-adenosylmethionine monomethyl esterification of trans-aconitate. This Rhodopseudomonas palustris (strain BisB5) protein is Trans-aconitate 2-methyltransferase.